We begin with the raw amino-acid sequence, 625 residues long: tRNA uridine 5-carboxymethylaminomethyl modification enzyme MnmG (625 aa).

13 to 18 contacts FAD; that stretch reads GGGHAG. 273-287 serves as a coordination point for NAD(+); that stretch reads GPRYCPSIEDKVVRF.

This sequence belongs to the MnmG family. In terms of assembly, homodimer. Heterotetramer of two MnmE and two MnmG subunits. It depends on FAD as a cofactor.

The protein localises to the cytoplasm. Its function is as follows. NAD-binding protein involved in the addition of a carboxymethylaminomethyl (cmnm) group at the wobble position (U34) of certain tRNAs, forming tRNA-cmnm(5)s(2)U34. This chain is tRNA uridine 5-carboxymethylaminomethyl modification enzyme MnmG, found in Methylococcus capsulatus (strain ATCC 33009 / NCIMB 11132 / Bath).